Consider the following 355-residue polypeptide: UDP-N-acetylglucosamine--N-acetylmuramyl-(pentapeptide) pyrophosphoryl-undecaprenol N-acetylglucosamine transferase (355 aa).

UDP-N-acetyl-alpha-D-glucosamine-binding positions include 15 to 17 (TGG), Asn127, Arg163, Ser191, Ile244, 263 to 268 (ALTVSE), and Gln288.

The protein belongs to the glycosyltransferase 28 family. MurG subfamily.

It is found in the cell inner membrane. It catalyses the reaction di-trans,octa-cis-undecaprenyl diphospho-N-acetyl-alpha-D-muramoyl-L-alanyl-D-glutamyl-meso-2,6-diaminopimeloyl-D-alanyl-D-alanine + UDP-N-acetyl-alpha-D-glucosamine = di-trans,octa-cis-undecaprenyl diphospho-[N-acetyl-alpha-D-glucosaminyl-(1-&gt;4)]-N-acetyl-alpha-D-muramoyl-L-alanyl-D-glutamyl-meso-2,6-diaminopimeloyl-D-alanyl-D-alanine + UDP + H(+). Its pathway is cell wall biogenesis; peptidoglycan biosynthesis. Its function is as follows. Cell wall formation. Catalyzes the transfer of a GlcNAc subunit on undecaprenyl-pyrophosphoryl-MurNAc-pentapeptide (lipid intermediate I) to form undecaprenyl-pyrophosphoryl-MurNAc-(pentapeptide)GlcNAc (lipid intermediate II). This Escherichia coli O127:H6 (strain E2348/69 / EPEC) protein is UDP-N-acetylglucosamine--N-acetylmuramyl-(pentapeptide) pyrophosphoryl-undecaprenol N-acetylglucosamine transferase.